We begin with the raw amino-acid sequence, 273 residues long: 4-hydroxy-tetrahydrodipicolinate reductase (273 aa).

Residues 12-17 (GAGGRM) and E38 each bind NAD(+). Residue R39 coordinates NADP(+). NAD(+) contacts are provided by residues 102-104 (GTT) and 126-129 (AANF). Residue H159 is the Proton donor/acceptor of the active site. H160 contributes to the (S)-2,3,4,5-tetrahydrodipicolinate binding site. The active-site Proton donor is K163. 169 to 170 (GT) lines the (S)-2,3,4,5-tetrahydrodipicolinate pocket.

It belongs to the DapB family. Homotetramer.

It is found in the cytoplasm. The catalysed reaction is (S)-2,3,4,5-tetrahydrodipicolinate + NAD(+) + H2O = (2S,4S)-4-hydroxy-2,3,4,5-tetrahydrodipicolinate + NADH + H(+). It catalyses the reaction (S)-2,3,4,5-tetrahydrodipicolinate + NADP(+) + H2O = (2S,4S)-4-hydroxy-2,3,4,5-tetrahydrodipicolinate + NADPH + H(+). Its pathway is amino-acid biosynthesis; L-lysine biosynthesis via DAP pathway; (S)-tetrahydrodipicolinate from L-aspartate: step 4/4. In terms of biological role, catalyzes the conversion of 4-hydroxy-tetrahydrodipicolinate (HTPA) to tetrahydrodipicolinate. This chain is 4-hydroxy-tetrahydrodipicolinate reductase, found in Salmonella paratyphi A (strain ATCC 9150 / SARB42).